Reading from the N-terminus, the 231-residue chain is Probable pyridoxamine 5'-phosphate oxidase (231 aa).

Position 20–23 (20–23 (QYEK)) interacts with pyridoxal 5'-phosphate. 74–77 (RLVL) contacts FMN. Lys-79 is a pyridoxal 5'-phosphate binding site. FMN-binding positions include 89–90 (FT), 96–97 (KK), and Gln-119. 3 residues coordinate pyridoxal 5'-phosphate: Tyr-137, Arg-141, and Ser-145. FMN is bound by residues 154–155 (QS) and Trp-202. 208 to 210 (RLH) is a binding site for pyridoxal 5'-phosphate. Residue Arg-212 coordinates FMN.

Belongs to the pyridoxamine 5'-phosphate oxidase family. In terms of assembly, homodimer. The cofactor is FMN.

It carries out the reaction pyridoxamine 5'-phosphate + O2 + H2O = pyridoxal 5'-phosphate + H2O2 + NH4(+). The catalysed reaction is pyridoxine 5'-phosphate + O2 = pyridoxal 5'-phosphate + H2O2. The protein operates within cofactor metabolism; pyridoxal 5'-phosphate salvage; pyridoxal 5'-phosphate from pyridoxamine 5'-phosphate: step 1/1. It functions in the pathway cofactor metabolism; pyridoxal 5'-phosphate salvage; pyridoxal 5'-phosphate from pyridoxine 5'-phosphate: step 1/1. Its function is as follows. Catalyzes the oxidation of either pyridoxine 5'-phosphate (PNP) or pyridoxamine 5'-phosphate (PMP) into pyridoxal 5'-phosphate (PLP). The polypeptide is Probable pyridoxamine 5'-phosphate oxidase (Schizosaccharomyces pombe (strain 972 / ATCC 24843) (Fission yeast)).